The sequence spans 336 residues: Dihydroorotate dehydrogenase (quinone) (336 aa).

FMN contacts are provided by residues 62 to 66 (AGLDK) and threonine 86. Position 66 (lysine 66) interacts with substrate. 111–115 (NRMGF) contacts substrate. Residues asparagine 139 and asparagine 172 each contribute to the FMN site. Asparagine 172 is a binding site for substrate. Serine 175 (nucleophile) is an active-site residue. Residue asparagine 177 participates in substrate binding. FMN contacts are provided by lysine 217 and threonine 245. 246–247 (NT) provides a ligand contact to substrate. FMN-binding positions include glycine 268, glycine 297, and 318–319 (YS).

This sequence belongs to the dihydroorotate dehydrogenase family. Type 2 subfamily. In terms of assembly, monomer. The cofactor is FMN.

The protein localises to the cell membrane. It carries out the reaction (S)-dihydroorotate + a quinone = orotate + a quinol. Its pathway is pyrimidine metabolism; UMP biosynthesis via de novo pathway; orotate from (S)-dihydroorotate (quinone route): step 1/1. In terms of biological role, catalyzes the conversion of dihydroorotate to orotate with quinone as electron acceptor. This Escherichia coli (strain SE11) protein is Dihydroorotate dehydrogenase (quinone).